Consider the following 422-residue polypeptide: Structural polyprotein (422 aa).

Over S1–Y359 the chain is Extracellular. Residues N200 and N262 are each glycosylated (N-linked (GlcNAc...) asparagine; by host). The helical transmembrane segment at G360–A382 threads the bilayer. Topologically, residues A383–A422 are cytoplasmic. S-palmitoyl cysteine; by host attachment occurs at residues C385, C395, and C416. The tract at residues C395–X415 is transient transmembrane before p62-6K protein processing.

Spike glycoprotein E2: Processing of the precursor of protein E3/E2 into E2 and E3 results in a heterodimer of the spike glycoproteins E2 and E1. Spike glycoprotein E2: Spike at virion surface are constituted of three E2-E1 heterodimers. Spike glycoprotein E2: Interacts with 6K protein. Post-translationally, structural polyprotein: Specific enzymatic cleavages in vivo yield mature proteins. Capsid protein is auto-cleaved during polyprotein translation, unmasking a signal peptide at the N-terminus of the precursor of E3/E2. The remaining polyprotein is then targeted to the host endoplasmic reticulum, where host signal peptidase cleaves it into pE2, 6K and E1 proteins. pE2 is further processed to mature E3 and E2 by host furin in trans-Golgi vesicle. In terms of processing, spike glycoprotein E2: Palmitoylated via thioester bonds. These palmitoylations may induce disruption of the C-terminus transmembrane. This would result in the reorientation of E2 C-terminus from lumenal to cytoplasmic side. Spike glycoprotein E2: N-glycosylated.

The protein localises to the virion membrane. It localises to the host cell membrane. In terms of biological role, spike glycoprotein E2: Plays a role in viral attachment to target host cell, by binding to the cell receptor. Synthesized as a p62 precursor which is processed by furin at the cell membrane just before virion budding, giving rise to E2-E1 heterodimer. The p62-E1 heterodimer is stable, whereas E2-E1 is unstable and dissociate at low pH. p62 is processed at the last step, presumably to avoid E1 fusion activation before its final export to cell surface. E2 C-terminus contains a transitory transmembrane that would be disrupted by palmitoylation, resulting in reorientation of the C-terminal tail from lumenal to cytoplasmic side. This step is critical since E2 C-terminus is involved in budding by interacting with capsid proteins. This release of E2 C-terminus in cytoplasm occurs lately in protein export, and precludes premature assembly of particles at the endoplasmic reticulum membrane. This Ross river virus (strain 213970) (RRV) protein is Structural polyprotein.